We begin with the raw amino-acid sequence, 1352 residues long: Alpha-protein kinase 1 (1352 aa).

The 121-residue stretch at 7-127 (DPNYGLLRSL…RWTSSLSTSD (121 aa)) folds into the Arf-GAP domain. The segment at 25–48 (CAECNSANVPYVCIKLGVFICPTC) adopts a C4-type zinc-finger fold. 6 disordered regions span residues 123–164 (LSTS…NNNN), 219–380 (TQSQ…PQHH), 424–445 (QQQQ…NSEP), 457–484 (HNHH…GNNS), 503–560 (FVEE…GGVS), and 619–658 (IINN…TNQN). A compositionally biased stretch (polar residues) spans 237–246 (GFSPFNSPRS). 2 stretches are compositionally biased toward low complexity: residues 268 to 287 (NNSN…NNGN) and 298 to 318 (NNNN…NNNN). Polar residues-rich tracts occupy residues 329-352 (KTFS…SGNS) and 359-379 (HPTQ…SPQH). Positions 393–429 (TTQQQLQQQQLQLQQQLQQQLQQQQQQQQQQQQQQQS) form a coiled coil. Composition is skewed to basic residues over residues 458-470 (NHHH…HHKQ) and 510-523 (HQHP…RHHS). The span at 619 to 636 (IINNQNNQNNNNNNNTNN) shows a compositional bias: low complexity. A coiled-coil region spans residues 689–781 (YIQQQQQQQQ…QQQQQQHINL (93 aa)). Disordered regions lie at residues 786 to 863 (PLQS…TDED) and 901 to 979 (TSPI…PDAR). Residues 799 to 812 (PQHSSSQYMNQQGY) are compositionally biased toward polar residues. Positions 821-859 (QPQSPQQIQPQPLQQQIFQQVQQQQPQIPQQSPQPLQSS) are enriched in low complexity. Positions 906-915 (QQPPQPPQPV) are enriched in pro residues. Positions 931-965 (QQQNGPTVPQQQQQQQQQQQQQQQQQQQQQQQQQP) are enriched in low complexity. Residues 990-1194 (RFDAKLGKWV…ICHYLGLSSV (205 aa)) form the Alpha-type protein kinase domain. 1164 to 1169 (GKGNLG) is a binding site for ATP. Disordered regions lie at residues 1198-1234 (PAND…SFNF) and 1279-1352 (QQQQ…KLVS). Residues 1241 to 1320 (HVLEQLNQQQ…QQQQQQQQNG (80 aa)) adopt a coiled-coil conformation. A compositionally biased stretch (low complexity) spans 1279–1319 (QQQQQQQQQQQQQQQQNQQQNQQQNQQQQQQQQQQQQQQQN). Residues 1321-1332 (HPPPQTPLPPTP) are compositionally biased toward pro residues. The segment covering 1334–1352 (QKDKPKIEVFGDILRKLVS) has biased composition (basic and acidic residues).

This sequence belongs to the protein kinase superfamily. Alpha-type protein kinase family. ALPK subfamily.

The protein is Alpha-protein kinase 1 (ak1) of Dictyostelium discoideum (Social amoeba).